Reading from the N-terminus, the 177-residue chain is Probable chemoreceptor glutamine deamidase CheD (177 aa).

This sequence belongs to the CheD family.

The catalysed reaction is L-glutaminyl-[protein] + H2O = L-glutamyl-[protein] + NH4(+). Probably deamidates glutamine residues to glutamate on methyl-accepting chemotaxis receptors (MCPs), playing an important role in chemotaxis. The polypeptide is Probable chemoreceptor glutamine deamidase CheD (Pseudomonas fluorescens (strain SBW25)).